The following is a 403-amino-acid chain: Para-nitrophenol 4-monooxygenase (403 aa).

FAD contacts are provided by residues 6-35 and 279-289; these read GVVVVGGGPVGLLTALKLGKAGIKVVVLEA and FRRGRVVLAGD.

Belongs to the PheA/TfdB FAD monooxygenase family. As to quaternary structure, monomer. FAD serves as cofactor.

The catalysed reaction is 4-nitrophenol + NADPH + O2 + H(+) = 1,4-benzoquinone + nitrite + NADP(+) + H2O. It functions in the pathway xenobiotic degradation; 4-nitrophenol degradation. Its function is as follows. Involved in the degradation of para-nitrophenol (4-NP). Catalyzes oxidation of 4-nitrophenol (4-NP) at position 4 with concomitant removal of the nitro group as nitrite and production of para-benzoquinone. This Pseudomonas sp. (strain WBC-3) protein is Para-nitrophenol 4-monooxygenase (pnpA).